The sequence spans 99 residues: Class II hydrophobin 3 (99 aa).

The signal sequence occupies residues 1-18 (MRIDILATAALLAQLASA). 3 cysteine pairs are disulfide-bonded: Cys-31/Cys-79, Cys-40/Cys-70, and Cys-41/Cys-53.

Belongs to the cerato-ulmin hydrophobin family. Homodimer. Homodimers further self-assemble to form highly ordered films at water-air interfaces through intermolecular interactions.

The protein localises to the secreted. The protein resides in the cell wall. In terms of biological role, aerial growth, conidiation, and dispersal of filamentous fungi in the environment rely upon a capability of their secreting small amphipathic proteins called hydrophobins (HPBs) with low sequence identity. Class I can self-assemble into an outermost layer of rodlet bundles on aerial cell surfaces, conferring cellular hydrophobicity that supports fungal growth, development and dispersal; whereas Class II form highly ordered films at water-air interfaces through intermolecular interactions but contribute nothing to the rodlet structure. Hyd3 is a class II hydrophobin required for barley root colonization. Hyd1 and Hyd3 are jointly required for conidial hydrophobicity and dispersal, but seem not to be involved in mycelia hydrophobicity. Inhibits conidial germination in environments not suitable for mycelial growth. Plays probably a role in intraspecific signaling or hyphal fusion. The sequence is that of Class II hydrophobin 3 from Bionectria ochroleuca (Gliocladium roseum).